We begin with the raw amino-acid sequence, 116 residues long: Large ribosomal subunit protein bL19 (116 aa).

This sequence belongs to the bacterial ribosomal protein bL19 family.

In terms of biological role, this protein is located at the 30S-50S ribosomal subunit interface and may play a role in the structure and function of the aminoacyl-tRNA binding site. The protein is Large ribosomal subunit protein bL19 of Staphylococcus haemolyticus (strain JCSC1435).